The primary structure comprises 575 residues: Glutathione/L-cysteine transport system ATP-binding/permease protein CydD (575 aa).

6 helical membrane-spanning segments follow: residues L17–F37, I53–S73, I135–F155, I161–V181, F246–Q266, and T275–S295. The ABC transmembrane type-1 domain occupies V19–G303. The ABC transporter domain occupies L337–L570. G370 to S377 lines the ATP pocket.

It belongs to the ABC transporter superfamily. Cysteine exporter (TC 3.A.1.129.1) family. Forms a heterodimer with CydC.

The protein localises to the cell membrane. The enzyme catalyses L-cysteine(in) + ATP + H2O = L-cysteine(out) + ADP + phosphate + H(+). It carries out the reaction glutathione(in) + ATP + H2O = glutathione(out) + ADP + phosphate + H(+). Its function is as follows. Part of the ABC transporter complex CydDC that exports the reduced low-molecular-weight thiols cysteine and glutathione from the cell. Export of these thiol-containing redox-active molecules may be crucial for redox homeostasis, permitting correct assembly of various respiratory complexes and formation of correct disulfide bonds in secreted proteins. CydD contains transmembrane domains (TMD), which form a pore in the membrane, and an ATP-binding domain (NBD), which is responsible for energy generation. The sequence is that of Glutathione/L-cysteine transport system ATP-binding/permease protein CydD (cydD) from Bacillus subtilis (strain 168).